Consider the following 524-residue polypeptide: Probable beta-1,4-xylosyltransferase IRX14 (524 aa).

At 1–51 (MMKSLLPQSQLRRSAAAASAARSSGGGAGSGGADGAGSDGGAGGRAPATST) the chain is on the cytoplasmic side. Residues 21 to 41 (ARSSGGGAGSGGADGAGSDGG) are disordered. Positions 24-41 (SGGGAGSGGADGAGSDGG) are enriched in gly residues. A helical; Signal-anchor for type II membrane protein transmembrane segment spans residues 52 to 71 (FWFLLHALCCLVSLFLGFRF). The Lumenal portion of the chain corresponds to 72-524 (SRLLFFLLFS…SRSTTKRKEN (453 aa)). 4 N-linked (GlcNAc...) asparagine glycosylation sites follow: N132, N135, N240, and N353. Positions 492–524 (AELVDSKQDQEGRRLSRTDRSSRSRSTTKRKEN) are disordered. Residues 495–513 (VDSKQDQEGRRLSRTDRSS) are compositionally biased toward basic and acidic residues.

The protein belongs to the glycosyltransferase 43 family.

Its subcellular location is the golgi apparatus membrane. In terms of biological role, probable beta-1,4-xylosyltransferase involved in xylan biosynthesis in cell walls. The polypeptide is Probable beta-1,4-xylosyltransferase IRX14 (Oryza sativa subsp. japonica (Rice)).